The primary structure comprises 472 residues: MSSGTLYDKVWDLHRVADLPGGSTQLFIGLHLIHEVTSPQAFAALEDKGLTVRCPQRTVATVDHIVPTTSQARPFADPLAEEMLSTLERNCSHHGITLHGLGSGRQGIVHVIAPELGLTQPGMTVACGDSHTSTHGAFGAIAFGIGTSQVRDVLASQSLAMNKLKVRRIWVENQLSPGVFAKDLILHVIRSLGVKAGVGYAYEFSGPAIEALSMEERMTLCNMAIEGGARCGYVNPDQTTFDYLHGRAQAPSAEAWDRAVSWWRSLASGADACFDDEVRFDAATIAPTVTWGITPGQGIGVDETVPRPEQLDPADRPIAEEAYRYMDLAPGQAIAGVPVDVCFIGSCTNGRLSDLQAAAAVAKGRHVASGIRAFVVPGSEQVARAAEAEGLDAVFREAGFEWREPGCSMCLAMNPDRLEGRQISASSSNRNFKGRQGSASGRTLLMSPAMVAAAAITGQVRDVRQLNCMTTD.

[4Fe-4S] cluster contacts are provided by Cys347, Cys407, and Cys410.

It belongs to the aconitase/IPM isomerase family. LeuC type 1 subfamily. Heterodimer of LeuC and LeuD. Requires [4Fe-4S] cluster as cofactor.

It catalyses the reaction (2R,3S)-3-isopropylmalate = (2S)-2-isopropylmalate. The protein operates within amino-acid biosynthesis; L-leucine biosynthesis; L-leucine from 3-methyl-2-oxobutanoate: step 2/4. Catalyzes the isomerization between 2-isopropylmalate and 3-isopropylmalate, via the formation of 2-isopropylmaleate. The sequence is that of 3-isopropylmalate dehydratase large subunit from Synechococcus sp. (strain WH7803).